We begin with the raw amino-acid sequence, 344 residues long: L-rhamnose-proton symporter (344 aa).

10 helical membrane-spanning segments follow: residues 4–24 (PILLGIFWHFIGAASAACFYA), 38–58 (WSLGGFFSWIILPWSISWWLL), 68–88 (FDMATLLPIFLFGAMWGIGNI), 101–121 (MGIGIAIGVTLIIGTLMTPVL), 137–157 (TLLGVLVAVIGVAIVSYAGLL), 175–195 (LILAVMCGIFSAGMSFAMDAA), 214–234 (LPSYVVIMGGGAIVNLGFCFI), 255–275 (LIANALFAILGGVMWYLQFFF), 290–310 (ISWMLHMSFYVLCGGIVGLLF), and 324–344 (LVLGCVVIILAANIVGLGMAV).

The protein belongs to the L-rhamnose transporter (TC 2.A.7.6) family.

It is found in the cell inner membrane. It carries out the reaction L-rhamnopyranose(in) + H(+)(in) = L-rhamnopyranose(out) + H(+)(out). In terms of biological role, uptake of L-rhamnose across the cytoplasmic membrane with the concomitant transport of protons into the cell (symport system). The polypeptide is L-rhamnose-proton symporter (Pectobacterium atrosepticum (strain SCRI 1043 / ATCC BAA-672) (Erwinia carotovora subsp. atroseptica)).